A 418-amino-acid polypeptide reads, in one-letter code: MANKLRNYTINFGPQHPAAHGVLRMILELDGEQIVRADPHIGLLHRGTEKLAETKTYLQALPYMDRLDYVSMMVNEQAYCLAVEKLVGIDVPIRAQYIRVMFAEVTRILNHLMGIGSHAFDIGAMTAILYAFRDREELMDLYEAVSGARMHAAYFRPGGVYRDLPDFMPKYEGSKFRNAKVLKQLNESREGTMLDFIDAFCERFPKNIDTLETLLTDNRIWKQRTVGIGVVSPERAMQKGFTGVMLRGSGVEWDVRKTQPYEVYDKMDFDIPVGVNGDCYDRYLCRMEEMRQSVRIIKQCSEWLRVNPGPVITTNHKFAPPKRTEMKTGMEDLIHHFKLFTEGMHVPEGETYTAVEHPKGEFGVYIISDGANKPYRLKIRAPGFAHLQGMDEMAKGHMLADVVAIIGTQDIVFGEVDR.

The protein belongs to the complex I 49 kDa subunit family. NDH-1 is composed of 14 different subunits. Subunits NuoB, C, D, E, F, and G constitute the peripheral sector of the complex.

It localises to the cell inner membrane. The catalysed reaction is a quinone + NADH + 5 H(+)(in) = a quinol + NAD(+) + 4 H(+)(out). NDH-1 shuttles electrons from NADH, via FMN and iron-sulfur (Fe-S) centers, to quinones in the respiratory chain. The immediate electron acceptor for the enzyme in this species is believed to be ubiquinone. Couples the redox reaction to proton translocation (for every two electrons transferred, four hydrogen ions are translocated across the cytoplasmic membrane), and thus conserves the redox energy in a proton gradient. The sequence is that of NADH-quinone oxidoreductase subunit D from Neisseria meningitidis serogroup B (strain ATCC BAA-335 / MC58).